A 165-amino-acid polypeptide reads, in one-letter code: UPF0303 protein Bcep18194_A4700 (165 aa).

Belongs to the UPF0303 family.

The polypeptide is UPF0303 protein Bcep18194_A4700 (Burkholderia lata (strain ATCC 17760 / DSM 23089 / LMG 22485 / NCIMB 9086 / R18194 / 383)).